Consider the following 384-residue polypeptide: Carbamoyl phosphate synthase small chain (384 aa).

A CPSase region spans residues 1 to 192 (MMKRIPAILV…LTDNIRVHRV (192 aa)). Residues serine 51, glycine 244, and glycine 246 each coordinate L-glutamine. Positions 196 to 382 (KVIVIDFGVK…IEIMTKSKNK (187 aa)) constitute a Glutamine amidotransferase type-1 domain. The active-site Nucleophile is cysteine 272. Positions 273, 276, 312, 314, and 315 each coordinate L-glutamine. Residues histidine 355 and glutamate 357 contribute to the active site.

It belongs to the CarA family. Composed of two chains; the small (or glutamine) chain promotes the hydrolysis of glutamine to ammonia, which is used by the large (or ammonia) chain to synthesize carbamoyl phosphate. Tetramer of heterodimers (alpha,beta)4.

It localises to the plastid. It is found in the chloroplast. It catalyses the reaction hydrogencarbonate + L-glutamine + 2 ATP + H2O = carbamoyl phosphate + L-glutamate + 2 ADP + phosphate + 2 H(+). It carries out the reaction L-glutamine + H2O = L-glutamate + NH4(+). Its pathway is amino-acid biosynthesis; L-arginine biosynthesis; carbamoyl phosphate from bicarbonate: step 1/1. It participates in pyrimidine metabolism; UMP biosynthesis via de novo pathway; (S)-dihydroorotate from bicarbonate: step 1/3. In terms of biological role, small subunit of the glutamine-dependent carbamoyl phosphate synthetase (CPSase). CPSase catalyzes the formation of carbamoyl phosphate from the ammonia moiety of glutamine, carbonate, and phosphate donated by ATP, constituting the first step of 2 biosynthetic pathways, one leading to arginine and/or urea and the other to pyrimidine nucleotides. The small subunit (glutamine amidotransferase) binds and cleaves glutamine to supply the large subunit with the substrate ammonia. This chain is Carbamoyl phosphate synthase small chain, found in Pyropia yezoensis (Susabi-nori).